The sequence spans 298 residues: ATP phosphoribosyltransferase (298 aa).

The protein belongs to the ATP phosphoribosyltransferase family. Long subfamily. Mg(2+) is required as a cofactor.

The protein resides in the cytoplasm. The catalysed reaction is 1-(5-phospho-beta-D-ribosyl)-ATP + diphosphate = 5-phospho-alpha-D-ribose 1-diphosphate + ATP. Its pathway is amino-acid biosynthesis; L-histidine biosynthesis; L-histidine from 5-phospho-alpha-D-ribose 1-diphosphate: step 1/9. Its activity is regulated as follows. Feedback inhibited by histidine. Functionally, catalyzes the condensation of ATP and 5-phosphoribose 1-diphosphate to form N'-(5'-phosphoribosyl)-ATP (PR-ATP). Has a crucial role in the pathway because the rate of histidine biosynthesis seems to be controlled primarily by regulation of HisG enzymatic activity. The protein is ATP phosphoribosyltransferase of Aliivibrio fischeri (strain MJ11) (Vibrio fischeri).